We begin with the raw amino-acid sequence, 702 residues long: Ribosomal RNA large subunit methyltransferase K/L (702 aa).

The THUMP domain occupies 43-154; it reads LIYQSLMWSR…KETASIALDL (112 aa).

It belongs to the methyltransferase superfamily. RlmKL family.

The protein resides in the cytoplasm. It carries out the reaction guanosine(2445) in 23S rRNA + S-adenosyl-L-methionine = N(2)-methylguanosine(2445) in 23S rRNA + S-adenosyl-L-homocysteine + H(+). It catalyses the reaction guanosine(2069) in 23S rRNA + S-adenosyl-L-methionine = N(2)-methylguanosine(2069) in 23S rRNA + S-adenosyl-L-homocysteine + H(+). Functionally, specifically methylates the guanine in position 2445 (m2G2445) and the guanine in position 2069 (m7G2069) of 23S rRNA. The protein is Ribosomal RNA large subunit methyltransferase K/L of Salmonella arizonae (strain ATCC BAA-731 / CDC346-86 / RSK2980).